A 228-amino-acid polypeptide reads, in one-letter code: Orotidine 5'-phosphate decarboxylase (228 aa).

Substrate is bound by residues Asp10, Lys33, 60 to 69, Thr116, Arg178, Gln187, Gly207, and Arg208; that span reads DLKLYDIPHT. The active-site Proton donor is the Lys62.

The protein belongs to the OMP decarboxylase family. Type 1 subfamily. In terms of assembly, homodimer.

The enzyme catalyses orotidine 5'-phosphate + H(+) = UMP + CO2. It functions in the pathway pyrimidine metabolism; UMP biosynthesis via de novo pathway; UMP from orotate: step 2/2. Functionally, catalyzes the decarboxylation of orotidine 5'-monophosphate (OMP) to uridine 5'-monophosphate (UMP). In Oenococcus oeni (strain ATCC BAA-331 / PSU-1), this protein is Orotidine 5'-phosphate decarboxylase.